A 106-amino-acid polypeptide reads, in one-letter code: Pyrimidine/purine nucleoside phosphorylase (106 aa).

The protein belongs to the nucleoside phosphorylase PpnP family.

The catalysed reaction is a purine D-ribonucleoside + phosphate = a purine nucleobase + alpha-D-ribose 1-phosphate. The enzyme catalyses adenosine + phosphate = alpha-D-ribose 1-phosphate + adenine. It carries out the reaction cytidine + phosphate = cytosine + alpha-D-ribose 1-phosphate. It catalyses the reaction guanosine + phosphate = alpha-D-ribose 1-phosphate + guanine. The catalysed reaction is inosine + phosphate = alpha-D-ribose 1-phosphate + hypoxanthine. The enzyme catalyses thymidine + phosphate = 2-deoxy-alpha-D-ribose 1-phosphate + thymine. It carries out the reaction uridine + phosphate = alpha-D-ribose 1-phosphate + uracil. It catalyses the reaction xanthosine + phosphate = alpha-D-ribose 1-phosphate + xanthine. Its function is as follows. Catalyzes the phosphorolysis of diverse nucleosides, yielding D-ribose 1-phosphate and the respective free bases. Can use uridine, adenosine, guanosine, cytidine, thymidine, inosine and xanthosine as substrates. Also catalyzes the reverse reactions. The polypeptide is Pyrimidine/purine nucleoside phosphorylase (Burkholderia ambifaria (strain ATCC BAA-244 / DSM 16087 / CCUG 44356 / LMG 19182 / AMMD) (Burkholderia cepacia (strain AMMD))).